Reading from the N-terminus, the 119-residue chain is Beta-2-microglobulin (119 aa).

An N-terminal signal peptide occupies residues 1 to 20 (MFRSVALAVLALLFLSGLEA). An Ig-like C1-type domain is found at 25–114 (PKIQVYSRHP…VTLSGPRTVK (90 aa)). Cysteine 45 and cysteine 100 are joined by a disulfide.

This sequence belongs to the beta-2-microglobulin family. In terms of assembly, heterodimer of an alpha chain and a beta chain. Beta-2-microglobulin is the beta-chain of major histocompatibility complex class I molecules.

The protein resides in the secreted. Component of the class I major histocompatibility complex (MHC). Involved in the presentation of peptide antigens to the immune system. The sequence is that of Beta-2-microglobulin (B2M) from Chlorocebus aethiops (Green monkey).